The sequence spans 378 residues: UDP-N-acetylglucosamine--N-acetylmuramyl-(pentapeptide) pyrophosphoryl-undecaprenol N-acetylglucosamine transferase (378 aa).

UDP-N-acetyl-alpha-D-glucosamine-binding positions include 14 to 16, Asn125, Arg165, Ser193, and Gln293; that span reads TGG.

It belongs to the glycosyltransferase 28 family. MurG subfamily.

The protein resides in the cell inner membrane. It carries out the reaction di-trans,octa-cis-undecaprenyl diphospho-N-acetyl-alpha-D-muramoyl-L-alanyl-D-glutamyl-meso-2,6-diaminopimeloyl-D-alanyl-D-alanine + UDP-N-acetyl-alpha-D-glucosamine = di-trans,octa-cis-undecaprenyl diphospho-[N-acetyl-alpha-D-glucosaminyl-(1-&gt;4)]-N-acetyl-alpha-D-muramoyl-L-alanyl-D-glutamyl-meso-2,6-diaminopimeloyl-D-alanyl-D-alanine + UDP + H(+). The protein operates within cell wall biogenesis; peptidoglycan biosynthesis. Cell wall formation. Catalyzes the transfer of a GlcNAc subunit on undecaprenyl-pyrophosphoryl-MurNAc-pentapeptide (lipid intermediate I) to form undecaprenyl-pyrophosphoryl-MurNAc-(pentapeptide)GlcNAc (lipid intermediate II). This Bartonella tribocorum (strain CIP 105476 / IBS 506) protein is UDP-N-acetylglucosamine--N-acetylmuramyl-(pentapeptide) pyrophosphoryl-undecaprenol N-acetylglucosamine transferase.